The sequence spans 344 residues: Heat-inducible transcription repressor HrcA (344 aa).

It belongs to the HrcA family.

Negative regulator of class I heat shock genes (grpE-dnaK-dnaJ and groELS operons). Prevents heat-shock induction of these operons. The protein is Heat-inducible transcription repressor HrcA of Geobacillus stearothermophilus (Bacillus stearothermophilus).